A 240-amino-acid polypeptide reads, in one-letter code: ATP-dependent dethiobiotin synthetase BioD (240 aa).

ATP is bound at residue Glu12–Val17. Thr16 is a binding site for Mg(2+). Residue Lys37 is part of the active site. Substrate is bound at residue Ser41. Residues Asp54, Glu115–Gly118, Asn179–Gln180, and Pro207–Ile209 each bind ATP. Positions 54 and 115 each coordinate Mg(2+).

Belongs to the dethiobiotin synthetase family. In terms of assembly, homodimer. Mg(2+) is required as a cofactor.

It localises to the cytoplasm. The enzyme catalyses (7R,8S)-7,8-diammoniononanoate + CO2 + ATP = (4R,5S)-dethiobiotin + ADP + phosphate + 3 H(+). It participates in cofactor biosynthesis; biotin biosynthesis; biotin from 7,8-diaminononanoate: step 1/2. Catalyzes a mechanistically unusual reaction, the ATP-dependent insertion of CO2 between the N7 and N8 nitrogen atoms of 7,8-diaminopelargonic acid (DAPA, also called 7,8-diammoniononanoate) to form a ureido ring. The sequence is that of ATP-dependent dethiobiotin synthetase BioD from Clostridium acetobutylicum (strain ATCC 824 / DSM 792 / JCM 1419 / IAM 19013 / LMG 5710 / NBRC 13948 / NRRL B-527 / VKM B-1787 / 2291 / W).